Reading from the N-terminus, the 95-residue chain is Aspartyl/glutamyl-tRNA(Asn/Gln) amidotransferase subunit C (95 aa).

This sequence belongs to the GatC family. In terms of assembly, heterotrimer of A, B and C subunits.

It carries out the reaction L-glutamyl-tRNA(Gln) + L-glutamine + ATP + H2O = L-glutaminyl-tRNA(Gln) + L-glutamate + ADP + phosphate + H(+). The enzyme catalyses L-aspartyl-tRNA(Asn) + L-glutamine + ATP + H2O = L-asparaginyl-tRNA(Asn) + L-glutamate + ADP + phosphate + 2 H(+). Allows the formation of correctly charged Asn-tRNA(Asn) or Gln-tRNA(Gln) through the transamidation of misacylated Asp-tRNA(Asn) or Glu-tRNA(Gln) in organisms which lack either or both of asparaginyl-tRNA or glutaminyl-tRNA synthetases. The reaction takes place in the presence of glutamine and ATP through an activated phospho-Asp-tRNA(Asn) or phospho-Glu-tRNA(Gln). This is Aspartyl/glutamyl-tRNA(Asn/Gln) amidotransferase subunit C from Rhizorhabdus wittichii (strain DSM 6014 / CCUG 31198 / JCM 15750 / NBRC 105917 / EY 4224 / RW1) (Sphingomonas wittichii).